The primary structure comprises 442 residues: Dihydrolipoyllysine-residue acetyltransferase component of pyruvate dehydrogenase complex (442 aa).

Residues 2 to 77 (AFEFKLPDIG…TVGQTIITFD (76 aa)) enclose the Lipoyl-binding domain. Lys43 is modified (N6-lipoyllysine). Over residues 84–97 (LQFKGSDESDDAKT) the composition is skewed to basic and acidic residues. The interval 84 to 136 (LQFKGSDESDDAKTEAQVQSTAEAGQDVAKEEQAQEPAKATGAGQQDQAEVDP) is disordered. Residues 141 to 178 (IAMPSVRKYAREKGVDIRKVTGSGNNGRVVKEDIDSFV) enclose the Peripheral subunit-binding (PSBD) domain. Residues 182 to 208 (AQEAAPQETAAPQETAAKPAAAPAPEG) are compositionally biased toward low complexity. The interval 182-215 (AQEAAPQETAAPQETAAKPAAAPAPEGEFPETRE) is disordered. His413 is a catalytic residue.

It belongs to the 2-oxoacid dehydrogenase family. As to quaternary structure, forms a 24-polypeptide structural core with octahedral symmetry. (R)-lipoate serves as cofactor.

It carries out the reaction N(6)-[(R)-dihydrolipoyl]-L-lysyl-[protein] + acetyl-CoA = N(6)-[(R)-S(8)-acetyldihydrolipoyl]-L-lysyl-[protein] + CoA. Its function is as follows. The pyruvate dehydrogenase complex catalyzes the overall conversion of pyruvate to acetyl-CoA and CO(2). It contains multiple copies of three enzymatic components: pyruvate dehydrogenase (E1), dihydrolipoamide acetyltransferase (E2) and lipoamide dehydrogenase (E3). Functionally, the B.subtilis PDH complex also possesses branched-chain 2-oxoacid dehydrogenase (BCDH) activity. In Bacillus subtilis (strain 168), this protein is Dihydrolipoyllysine-residue acetyltransferase component of pyruvate dehydrogenase complex (pdhC).